Consider the following 210-residue polypeptide: dTTP/UTP pyrophosphatase (210 aa).

Asp85 functions as the Proton acceptor in the catalytic mechanism.

The protein belongs to the Maf family. YhdE subfamily. The cofactor is a divalent metal cation.

It localises to the cytoplasm. It carries out the reaction dTTP + H2O = dTMP + diphosphate + H(+). The catalysed reaction is UTP + H2O = UMP + diphosphate + H(+). Functionally, nucleoside triphosphate pyrophosphatase that hydrolyzes dTTP and UTP. May have a dual role in cell division arrest and in preventing the incorporation of modified nucleotides into cellular nucleic acids. This chain is dTTP/UTP pyrophosphatase, found in Saccharophagus degradans (strain 2-40 / ATCC 43961 / DSM 17024).